The chain runs to 451 residues: DNA polymerase IV (451 aa).

Positions 5–187 constitute a UmuC domain; it reads VIHVDMDAFF…LPVGRLWGVG (183 aa). D9 and D104 together coordinate Mg(2+). E105 is an active-site residue.

It belongs to the DNA polymerase type-Y family. In terms of assembly, monomer. Mg(2+) serves as cofactor.

Its subcellular location is the cytoplasm. The enzyme catalyses DNA(n) + a 2'-deoxyribonucleoside 5'-triphosphate = DNA(n+1) + diphosphate. Functionally, poorly processive, error-prone DNA polymerase involved in untargeted mutagenesis. Copies undamaged DNA at stalled replication forks, which arise in vivo from mismatched or misaligned primer ends. These misaligned primers can be extended by PolIV. Exhibits no 3'-5' exonuclease (proofreading) activity. May be involved in translesional synthesis, in conjunction with the beta clamp from PolIII. This Corynebacterium diphtheriae (strain ATCC 700971 / NCTC 13129 / Biotype gravis) protein is DNA polymerase IV.